Here is a 1016-residue protein sequence, read N- to C-terminus: Mediator of RNA polymerase II transcription subunit 5 (1016 aa).

It belongs to the Mediator complex subunit 5 family. As to quaternary structure, component of the Mediator complex.

The protein resides in the nucleus. Component of the Mediator complex, a coactivator involved in the regulated transcription of nearly all RNA polymerase II-dependent genes. Mediator functions as a bridge to convey information from gene-specific regulatory proteins to the basal RNA polymerase II transcription machinery. Mediator is recruited to promoters by direct interactions with regulatory proteins and serves as a scaffold for the assembly of a functional preinitiation complex with RNA polymerase II and the general transcription factors. This chain is Mediator of RNA polymerase II transcription subunit 5 (nut1), found in Aspergillus terreus (strain NIH 2624 / FGSC A1156).